Here is a 438-residue protein sequence, read N- to C-terminus: Methylenetetrahydrofolate--tRNA-(uracil-5-)-methyltransferase TrmFO (438 aa).

FAD is bound at residue 10–15; it reads GGGLAG.

The protein belongs to the MnmG family. TrmFO subfamily. It depends on FAD as a cofactor.

The protein resides in the cytoplasm. It catalyses the reaction uridine(54) in tRNA + (6R)-5,10-methylene-5,6,7,8-tetrahydrofolate + NADH + H(+) = 5-methyluridine(54) in tRNA + (6S)-5,6,7,8-tetrahydrofolate + NAD(+). It carries out the reaction uridine(54) in tRNA + (6R)-5,10-methylene-5,6,7,8-tetrahydrofolate + NADPH + H(+) = 5-methyluridine(54) in tRNA + (6S)-5,6,7,8-tetrahydrofolate + NADP(+). Catalyzes the folate-dependent formation of 5-methyl-uridine at position 54 (M-5-U54) in all tRNAs. The polypeptide is Methylenetetrahydrofolate--tRNA-(uracil-5-)-methyltransferase TrmFO (Trichormus variabilis (strain ATCC 29413 / PCC 7937) (Anabaena variabilis)).